A 132-amino-acid chain; its full sequence is Protein NrdI (132 aa).

This sequence belongs to the NrdI family.

Its function is as follows. Probably involved in ribonucleotide reductase function. The polypeptide is Protein NrdI (Staphylococcus haemolyticus (strain JCSC1435)).